The chain runs to 385 residues: Alanine--glyoxylate aminotransferase 1 (385 aa).

The residue at position 201 (Lys201) is an N6-(pyridoxal phosphate)lysine. Residue Arg354 coordinates substrate.

It belongs to the class-V pyridoxal-phosphate-dependent aminotransferase family. As to quaternary structure, homodimer. It depends on pyridoxal 5'-phosphate as a cofactor.

It carries out the reaction glyoxylate + L-alanine = glycine + pyruvate. Its pathway is amino-acid biosynthesis; glycine biosynthesis; glycine from glyoxylate: step 1/1. Functionally, has alanine:glyoxylate aminotransferase activity. In Saccharomyces cerevisiae (strain ATCC 204508 / S288c) (Baker's yeast), this protein is Alanine--glyoxylate aminotransferase 1.